Consider the following 355-residue polypeptide: Histidinol-phosphate aminotransferase (355 aa).

K218 carries the N6-(pyridoxal phosphate)lysine modification.

Belongs to the class-II pyridoxal-phosphate-dependent aminotransferase family. Histidinol-phosphate aminotransferase subfamily. In terms of assembly, homodimer. The cofactor is pyridoxal 5'-phosphate.

It catalyses the reaction L-histidinol phosphate + 2-oxoglutarate = 3-(imidazol-4-yl)-2-oxopropyl phosphate + L-glutamate. Its pathway is amino-acid biosynthesis; L-histidine biosynthesis; L-histidine from 5-phospho-alpha-D-ribose 1-diphosphate: step 7/9. This chain is Histidinol-phosphate aminotransferase, found in Pelodictyon phaeoclathratiforme (strain DSM 5477 / BU-1).